The following is a 473-amino-acid chain: PPE family protein PPE37 (473 aa).

The Iron-binding motif signature appears at 203–206; it reads DFLE. 2 helical membrane passes run 227–247 and 250–270; these read VLDWFISFVSGPVFTFLAYLV and PLIYFGPFAPLTSPVLLPAGL.

It belongs to the mycobacterial PPE family.

The protein resides in the cell membrane. Functionally, essential for efficient heme-iron acquisition (HIA). Binds iron. Strains with a functional PPE37 can utilize low concentrations of hemin very efficiently in broth and on agar plates. During infection, might interfere with the pro-inflammatory cytokine response in infected macrophages. In vitro, incubation of the protein in the presence of M.tuberculosis proteases leads to the cleavage of PPE37 into two segments, the N- and C-terminal segments. Transfection of human monocytic THP-1 cell lines with the N-terminal segment leads to the proliferation and differentiation of THP-1 cells into adherent stellate cells with dendritic cell-like morphology. Transfection of THP-1 cells with the C-terminal segment leads to the apoptosis of the cells. Recombinant protein antigens display strong B-cell response in tuberculosis patients and immunized mice. This chain is PPE family protein PPE37, found in Mycobacterium tuberculosis (strain ATCC 25618 / H37Rv).